The sequence spans 106 residues: MAEIRKGDTVKVIAGKEKGKSGRVLEVLREDGRVRVEKLMTVKRHQKKGRSQANPEGGILEMAGTIAISSVMVVGKDEKPVRREKIGRELGAKEKARLQKRKAAAK.

The segment covering 84–97 (EKIGRELGAKEKAR) has biased composition (basic and acidic residues). Residues 84–106 (EKIGRELGAKEKARLQKRKAAAK) are disordered.

Belongs to the universal ribosomal protein uL24 family. In terms of assembly, part of the 50S ribosomal subunit.

Functionally, one of two assembly initiator proteins, it binds directly to the 5'-end of the 23S rRNA, where it nucleates assembly of the 50S subunit. Its function is as follows. One of the proteins that surrounds the polypeptide exit tunnel on the outside of the subunit. The chain is Large ribosomal subunit protein uL24 from Anaeromyxobacter sp. (strain K).